The sequence spans 411 residues: Probable phosphatase HAD1 (411 aa).

Polar residues predominate over residues 14-23 (LPSPNTSQPP). Positions 14–33 (LPSPNTSQPPSAAPSRRGSF) are disordered. Catalysis depends on D61, which acts as the Nucleophile. 3 residues coordinate Mg(2+): D61, D63, and D338. D63 functions as the Proton donor in the catalytic mechanism. The interval 296–386 (PRPTPDVTPV…QSGQAGVTLD (91 aa)) is disordered. Positions 326–345 (VRNTQTIMKGSDDLTGNDSV) are enriched in polar residues. A compositionally biased stretch (basic and acidic residues) spans 362–373 (SVEKRAEMEFHR).

Belongs to the HAD-like hydrolase superfamily. Post-translationally, phosphorylated.

Its function is as follows. Probable phosphatase. Required for cell wall integrity and virulence. In Cryptococcus neoformans var. grubii serotype A (strain H99 / ATCC 208821 / CBS 10515 / FGSC 9487) (Filobasidiella neoformans var. grubii), this protein is Probable phosphatase HAD1.